Here is a 252-residue protein sequence, read N- to C-terminus: Large ribosomal subunit protein uL29m (252 aa).

The N-terminal 39 residues, 1–39 (MSTSTVIRPVARSLLQLRKAGNTPPAFLLPCLQSSSTTS), are a transit peptide targeting the mitochondrion. The span at 233-242 (EDVLAEAEGE) shows a compositional bias: acidic residues. The tract at residues 233-252 (EDVLAEAEGEAEPKPAQVTA) is disordered.

This sequence belongs to the universal ribosomal protein uL29 family. As to quaternary structure, component of the mitochondrial large ribosomal subunit. Mature mitochondrial ribosomes consist of a small (37S) and a large (54S) subunit. The 37S subunit contains at least 33 different proteins and 1 molecule of RNA (15S). The 54S subunit contains at least 45 different proteins and 1 molecule of RNA (21S).

The protein resides in the mitochondrion. In Botryotinia fuckeliana (strain B05.10) (Noble rot fungus), this protein is Large ribosomal subunit protein uL29m (mrpl4).